A 76-amino-acid chain; its full sequence is Large ribosomal subunit protein bL31 (76 aa).

It belongs to the bacterial ribosomal protein bL31 family. Type A subfamily. In terms of assembly, part of the 50S ribosomal subunit.

In terms of biological role, binds the 23S rRNA. The chain is Large ribosomal subunit protein bL31 from Methylocella silvestris (strain DSM 15510 / CIP 108128 / LMG 27833 / NCIMB 13906 / BL2).